We begin with the raw amino-acid sequence, 461 residues long: Pup--protein ligase (461 aa).

Glutamate 9 contacts Mg(2+). Residue arginine 53 coordinates ATP. Tyrosine 55 contributes to the Mg(2+) binding site. Aspartate 57 (proton acceptor) is an active-site residue. Glutamate 63 lines the Mg(2+) pocket. Threonine 66 and tryptophan 420 together coordinate ATP.

Belongs to the Pup ligase/Pup deamidase family. Pup-conjugating enzyme subfamily.

It catalyses the reaction ATP + [prokaryotic ubiquitin-like protein]-L-glutamate + [protein]-L-lysine = ADP + phosphate + N(6)-([prokaryotic ubiquitin-like protein]-gamma-L-glutamyl)-[protein]-L-lysine.. It participates in protein degradation; proteasomal Pup-dependent pathway. Its pathway is protein modification; protein pupylation. In terms of biological role, catalyzes the covalent attachment of the prokaryotic ubiquitin-like protein modifier Pup to the proteasomal substrate proteins, thereby targeting them for proteasomal degradation. This tagging system is termed pupylation. The ligation reaction involves the side-chain carboxylate of the C-terminal glutamate of Pup and the side-chain amino group of a substrate lysine. The protein is Pup--protein ligase of Renibacterium salmoninarum (strain ATCC 33209 / DSM 20767 / JCM 11484 / NBRC 15589 / NCIMB 2235).